We begin with the raw amino-acid sequence, 406 residues long: Bifunctional protein GlmU (406 aa).

The interval 1 to 221 (MFIILAAGHG…EEEATGINSR (221 aa)) is pyrophosphorylase. UDP-N-acetyl-alpha-D-glucosamine-binding positions include 5-8 (LAAG), lysine 19, glutamine 68, 73-74 (GT), 98-100 (YGD), glycine 134, glutamate 148, asparagine 162, and asparagine 219. A Mg(2+)-binding site is contributed by aspartate 100. Residue asparagine 219 participates in Mg(2+) binding. The linker stretch occupies residues 222-242 (NDLAKAEFYFQENRRKFFTDS). The interval 243-406 (GVTLVAPETV…RRKQMVKKIK (164 aa)) is N-acetyltransferase. UDP-N-acetyl-alpha-D-glucosamine is bound at residue lysine 308. Histidine 320 serves as the catalytic Proton acceptor. Tyrosine 323 and asparagine 334 together coordinate UDP-N-acetyl-alpha-D-glucosamine. Residues alanine 337, 343-344 (NY), alanine 380, and arginine 397 each bind acetyl-CoA.

The protein in the N-terminal section; belongs to the N-acetylglucosamine-1-phosphate uridyltransferase family. In the C-terminal section; belongs to the transferase hexapeptide repeat family. Homotrimer. Requires Mg(2+) as cofactor.

It localises to the cytoplasm. It carries out the reaction alpha-D-glucosamine 1-phosphate + acetyl-CoA = N-acetyl-alpha-D-glucosamine 1-phosphate + CoA + H(+). It catalyses the reaction N-acetyl-alpha-D-glucosamine 1-phosphate + UTP + H(+) = UDP-N-acetyl-alpha-D-glucosamine + diphosphate. Its pathway is nucleotide-sugar biosynthesis; UDP-N-acetyl-alpha-D-glucosamine biosynthesis; N-acetyl-alpha-D-glucosamine 1-phosphate from alpha-D-glucosamine 6-phosphate (route II): step 2/2. The protein operates within nucleotide-sugar biosynthesis; UDP-N-acetyl-alpha-D-glucosamine biosynthesis; UDP-N-acetyl-alpha-D-glucosamine from N-acetyl-alpha-D-glucosamine 1-phosphate: step 1/1. It functions in the pathway bacterial outer membrane biogenesis; LPS lipid A biosynthesis. In terms of biological role, catalyzes the last two sequential reactions in the de novo biosynthetic pathway for UDP-N-acetylglucosamine (UDP-GlcNAc). The C-terminal domain catalyzes the transfer of acetyl group from acetyl coenzyme A to glucosamine-1-phosphate (GlcN-1-P) to produce N-acetylglucosamine-1-phosphate (GlcNAc-1-P), which is converted into UDP-GlcNAc by the transfer of uridine 5-monophosphate (from uridine 5-triphosphate), a reaction catalyzed by the N-terminal domain. This is Bifunctional protein GlmU from Wolbachia sp. subsp. Brugia malayi (strain TRS).